Reading from the N-terminus, the 684-residue chain is Protein SEEDLING PLASTID DEVELOPMENT 1 (684 aa).

A chloroplast-targeting transit peptide spans 1-78 (MRALNSRLVL…FSFDVRSPSS (78 aa)). A disordered region spans residues 33–91 (SDSSSSFRRTRGARQRIASSKSPASSPSPVRRPSDGFSFDVRSPSSDSSISSRKSPTTA). Over residues 50-88 (ASSKSPASSPSPVRRPSDGFSFDVRSPSSDSSISSRKSP) the composition is skewed to low complexity. 220-227 (GSPGVGKT) is a binding site for ATP. The tract at residues 651–684 (PRRSTKKTLTSSSPQKSADGSMGTTGTRLPFLKD) is disordered. Positions 657–667 (KTLTSSSPQKS) are enriched in low complexity.

Belongs to the ycf45 family.

It is found in the plastid. Its subcellular location is the chloroplast membrane. It localises to the chloroplast envelope. In terms of biological role, required during eoplast (a highly reduced plastid type present during the degreening and dehydration stages of seed maturation) development in embryos and early stages of eoplast redifferentiation during seedling growth. This Arabidopsis thaliana (Mouse-ear cress) protein is Protein SEEDLING PLASTID DEVELOPMENT 1.